A 317-amino-acid chain; its full sequence is Protein RTA1 (317 aa).

Over 1 to 16 (MAKDGFELYRYTPELG) the chain is Extracellular. The chain crosses the membrane as a helical span at residues 17–37 (ASILFTVLFAVSGVAFVILLF). The Cytoplasmic portion of the chain corresponds to 38-64 (HYSVKSKRRVGSLMKSQPVLRYYGTVN). Residues 65–85 (LAGAYIPFIFGCFVECVGFAF) form a helical membrane-spanning segment. Residues 86–99 (RCKSSKDTTLLNPY) lie on the Extracellular side of the membrane. A helical membrane pass occupies residues 100–120 (IIQTVFLLVSPTLYAASIYMI). The Cytoplasmic portion of the chain corresponds to 121-142 (FGRMATLLFAENLMIMPARFNT). The helical transmembrane segment at 143-163 (TIFVIGDVGSLLLQAIGGAMM) threads the bilayer. At 164–178 (SKVTSASSGSHLVTA) the chain is on the extracellular side. The chain crosses the membrane as a helical span at residues 179–199 (GLFIQIAFFGLFIINEVLFIF). Over 200 to 214 (KMSKKPTNVSVRYGS) the chain is Cytoplasmic. Residues 215–235 (WKYLNIALLVNSFLILIRSIV) traverse the membrane as a helical segment. The Extracellular portion of the chain corresponds to 236 to 259 (RAVEFIQGYDGEIASHEWYLYIFD). Residues 260–280 (GLPMFLLVLIFIVAFPLINIF) form a helical membrane-spanning segment. Residues 281–317 (RIHEESIQAQQSARFDGTDYPDVEVTSIEEDLASKSE) lie on the Cytoplasmic side of the membrane.

It belongs to the lipid-translocating exporter (LTE) (TC 9.A.26.1) family.

It localises to the membrane. Functionally, involved in 7-aminocholesterol resistance. This is Protein RTA1 (RTA1) from Saccharomyces cerevisiae (strain ATCC 204508 / S288c) (Baker's yeast).